The chain runs to 599 residues: Adenine deaminase (599 aa).

Residues 1 to 31 (MARSNRRGGRGDPEDDPAWAPPGHRCAGERA) are disordered.

The protein belongs to the metallo-dependent hydrolases superfamily. Adenine deaminase family. It depends on Mn(2+) as a cofactor.

It carries out the reaction adenine + H2O + H(+) = hypoxanthine + NH4(+). The polypeptide is Adenine deaminase (Methanopyrus kandleri (strain AV19 / DSM 6324 / JCM 9639 / NBRC 100938)).